A 501-amino-acid chain; its full sequence is Aldehyde dehydrogenase 1A1 (501 aa).

Residue Ser2 is modified to N-acetylserine. Residues Lys91 and Lys128 each carry the N6-acetyllysine modification. NAD(+)-binding positions include 167 to 170 (IPWN), 193 to 196 (KPAE), 226 to 227 (GP), and 246 to 247 (GS). Lys252 bears the N6-acetyllysine mark. The active-site Proton acceptor is the Glu269. 269-271 (ELG) is a binding site for NAD(+). Cys303 (nucleophile) is an active-site residue. The segment at 336–501 (LNSGINQGPQ…VAIKISQKNS (166 aa)) is mediates interaction with PRMT3. Position 349–353 (349–353 (EQHDK)) interacts with NAD(+). N6-acetyllysine occurs at positions 353 and 367. 400–402 (EIF) provides a ligand contact to NAD(+). Lys410 is subject to N6-acetyllysine. Ser413 carries the post-translational modification Phosphoserine. N6-acetyllysine is present on residues Lys419, Lys435, and Lys495.

This sequence belongs to the aldehyde dehydrogenase family. Homotetramer. Interacts with PRMT3; the interaction is direct, inhibits ALDH1A1 aldehyde dehydrogenase activity and is independent of the methyltransferase activity of PRMT3. In terms of processing, the N-terminus is blocked most probably by acetylation.

The protein localises to the cytoplasm. The protein resides in the cytosol. Its subcellular location is the cell projection. It is found in the axon. It catalyses the reaction an aldehyde + NAD(+) + H2O = a carboxylate + NADH + 2 H(+). The catalysed reaction is all-trans-retinal + NAD(+) + H2O = all-trans-retinoate + NADH + 2 H(+). The enzyme catalyses 9-cis-retinal + NAD(+) + H2O = 9-cis-retinoate + NADH + 2 H(+). It carries out the reaction 11-cis-retinal + NAD(+) + H2O = 11-cis-retinoate + NADH + 2 H(+). It catalyses the reaction 13-cis-retinal + NAD(+) + H2O = 13-cis-retinoate + NADH + 2 H(+). The catalysed reaction is 3-deoxyglucosone + NAD(+) + H2O = 2-dehydro-3-deoxy-D-gluconate + NADH + 2 H(+). The enzyme catalyses (E)-4-hydroxynon-2-enal + NAD(+) + H2O = (E)-4-hydroxynon-2-enoate + NADH + 2 H(+). It carries out the reaction malonaldehyde + NAD(+) + H2O = 3-oxopropanoate + NADH + 2 H(+). It catalyses the reaction hexanal + NAD(+) + H2O = hexanoate + NADH + 2 H(+). The catalysed reaction is propanal + NAD(+) + H2O = propanoate + NADH + 2 H(+). The enzyme catalyses acetaldehyde + NAD(+) + H2O = acetate + NADH + 2 H(+). It carries out the reaction benzaldehyde + NAD(+) + H2O = benzoate + NADH + 2 H(+). It catalyses the reaction 4-aminobutanal + NAD(+) + H2O = 4-aminobutanoate + NADH + 2 H(+). It participates in cofactor metabolism; retinol metabolism. Its function is as follows. Cytosolic dehydrogenase that catalyzes the irreversible oxidation of a wide range of aldehydes to their corresponding carboxylic acid. Functions downstream of retinol dehydrogenases and catalyzes the oxidation of retinaldehyde into retinoic acid, the second step in the oxidation of retinol/vitamin A into retinoic acid. This pathway is crucial to control the levels of retinol and retinoic acid, two important molecules which excess can be teratogenic and cytotoxic. Also oxidizes aldehydes resulting from lipid peroxidation like (E)-4-hydroxynon-2-enal/HNE, malonaldehyde and hexanal that form protein adducts and are highly cytotoxic. By participating for instance to the clearance of (E)-4-hydroxynon-2-enal/HNE in the lens epithelium prevents the formation of HNE-protein adducts and lens opacification. Also functions downstream of fructosamine-3-kinase in the fructosamine degradation pathway by catalyzing the oxidation of 3-deoxyglucosone, the carbohydrate product of fructosamine 3-phosphate decomposition, which is itself a potent glycating agent that may react with lysine and arginine side-chains of proteins. Also has an aminobutyraldehyde dehydrogenase activity and is probably part of an alternative pathway for the biosynthesis of GABA/4-aminobutanoate in midbrain, thereby playing a role in GABAergic synaptic transmission. This chain is Aldehyde dehydrogenase 1A1, found in Mesocricetus auratus (Golden hamster).